The chain runs to 131 residues: Conotoxin Cal8.2 (131 aa).

Residues 1–19 form the signal peptide; the sequence is MKLLLTLLLGSALMCITLA. The propeptide occupies 20-38; sequence DECGLGTHRPVKEVIDNVR.

Contains 4 disulfide bonds. Expressed by the venom duct.

Its subcellular location is the secreted. Its function is as follows. Probable neurotoxin with unknown target. Possibly targets ion channels. The protein is Conotoxin Cal8.2 of Californiconus californicus (California cone).